We begin with the raw amino-acid sequence, 614 residues long: Vitamin B12 transporter BtuB (614 aa).

Residues 1 to 20 (MIKKASLLTACSVTAFSAWA) form the signal peptide. The TonB box motif lies at 26 to 33 (DTLVVTAN). Residues 38–152 (PRSTVLAPTT…IGGVVNIITT (115 aa)) form the TBDR plug domain. Cyanocob(III)alamin is bound by residues leucine 83, serine 85, asparagine 92, and 110 to 111 (VS). The TBDR beta-barrel domain occupies 155–614 (HPGTEISAGW…EYTLXGSYTF (460 aa)). 3 consecutive transmembrane segments (beta stranded) span residues 158–165 (TEISAGWG), 169–178 (YQNYDVSTQQ), and 184–195 (TRVTLLGDYAHT). Ca(2+) contacts are provided by aspartate 199, glutamine 211, aspartate 213, and aspartate 215. Transmembrane regions (beta stranded) follow at residues 217–227 (FLSKTLYGALE) and 232–248 (DAWSGFVRGYGYDNRTN). Ca(2+) is bound by residues tyrosine 249 and aspartate 250. A cyanocob(III)alamin-binding site is contributed by alanine 251. Aspartate 261 contacts Ca(2+). A run of 14 beta stranded transmembrane segments spans residues 263–277 (RKLYSQSWDAGLRYN), 279–296 (ELIKSQLITSYSHSKDYN), 309–325 (TLDEMKQYTVQWANNII), 328–337 (HGNIGAGVDW), 353–369 (YDQRNTGIYLTGLQQVG), 371–381 (FTFEGAGRSDD), 385–400 (FGRHGTWQTSAGWEFI), 403–417 (YRFIASYGTSYKAPN), 434–443 (KSKQWEGAFE), 449–458 (VNWRISGYRN), 473–490 (YYNEGKARIKGVEATANF), 494–509 (PLTHTVSYDYVDARNA), 517–529 (RRAKQQVKYQLDW), and 535–550 (DWGITYQYLGTRYDKD). Cyanocob(III)alamin is bound at residue threonine 309. Arginine 517 lines the cyanocob(III)alamin pocket. Cyanocob(III)alamin is bound at residue tyrosine 551. Beta stranded transmembrane passes span 558–572 (TVKMGGVSLWDLAVA), 585–596 (IANLFDKDYETV), and 602–614 (AGREYTLXGSYTF). The TonB C-terminal box motif lies at 597 to 614 (YGYQTAGREYTLXGSYTF).

It belongs to the TonB-dependent receptor family. BtuB (TC 1.B.14.3.1) subfamily.

It localises to the cell outer membrane. Its function is as follows. Involved in the active translocation of vitamin B12 (cyanocobalamin) across the outer membrane to the periplasmic space. It derives its energy for transport by interacting with the trans-periplasmic membrane protein TonB. The sequence is that of Vitamin B12 transporter BtuB from Escherichia coli O6:H1 (strain CFT073 / ATCC 700928 / UPEC).